A 179-amino-acid chain; its full sequence is MKLIILDRDGVVNQDSDAFVKSPDEWIALPGSLQAIARLTQADWTVVLATNQSGLARGLFDTATLNAIHDKMHRALAQMGGVVDAIFMCPHGPDDGCACRKPLPGMYRDIARRYDVDLAGVPAVGDSLRDLQAAAQAGCAPWLVQTGNGRKTLAQGGLPEGTRVCEDLAAVAEQLLQEA.

Catalysis depends on aspartate 7, which acts as the Nucleophile. Mg(2+) is bound by residues aspartate 7 and aspartate 9. Substrate is bound at residue aspartate 7. Aspartate 9 serves as the catalytic Proton donor. Residues 15–19, 50–53, and arginine 57 contribute to the substrate site; these read DSDAF and TNQS. Residues cysteine 89, histidine 91, cysteine 97, and cysteine 99 each contribute to the Zn(2+) site. Substrate is bound at residue arginine 100. Aspartate 126 is a binding site for Mg(2+). Arginine 129 is a binding site for substrate.

Monomer. Mg(2+) serves as cofactor. Requires Zn(2+) as cofactor.

The protein resides in the cytoplasm. It catalyses the reaction D-glycero-beta-D-manno-heptose 1,7-bisphosphate + H2O = D-glycero-beta-D-manno-heptose 1-phosphate + phosphate. It participates in nucleotide-sugar biosynthesis; ADP-L-glycero-beta-D-manno-heptose biosynthesis; ADP-L-glycero-beta-D-manno-heptose from D-glycero-beta-D-manno-heptose 7-phosphate: step 2/4. Its pathway is bacterial outer membrane biogenesis; LPS core biosynthesis. In terms of biological role, converts the D-glycero-beta-D-manno-heptose 1,7-bisphosphate (beta-HBP) intermediate into D-glycero-beta-D-manno-heptose 1-phosphate by removing the phosphate group at the C-7 position. The polypeptide is D-glycero-beta-D-manno-heptose-1,7-bisphosphate 7-phosphatase (Bordetella bronchiseptica (strain ATCC BAA-588 / NCTC 13252 / RB50) (Alcaligenes bronchisepticus)).